The primary structure comprises 669 residues: MTAAAGSAGHAAVPLLLCALLVPGGAYVLDDSDGLGREFDGVGAVSGGGATSRLLVNYPEPYRSQILDYLFKPNFGASLHILKVEIGGDGQTTDGTEPSHMHYALDENFFRGYEWWLMKEAKKRNPNIILMGLPWSFPGWIGKGFNWPYVNLQLTAYYIMTWIVGAKHYHDLDIDYIGIWNERSFDINYIKVLRRMLNYQGLDRVKIIASDNLWEPISASMLLDSELLKVIDVIGAHYPGTHTVKDAKLTKKKLWSSEDFSTLNSDVGAGCLGRILNQNYVNGYMTATIAWNLVASYYEQLPYGRCGLMTAQEPWSGHYVVESPIWVSAHTTQFTQPGWYYLKTVGHLEKGGSYVALTDGLGNLTIIVETMSHKQSACIRPFLPYFNVSRQFATFVLKGSFSEIPELQVWYTKLGKPSERYLFKQLDSLWLLDSSSTFTLELQEDEIFTLTTLTVGSKGSYPLPPKSEPFPQIYEDDFDVDYPFFSEAPNFADQTGVFEYFTNIEDPGEHRFTLRQVLNQRPITWAADAYNTISIIGDYKWSNLTVRCDVYIETPEKGGVFIAGRVNKGGILIRSARGIFFWIFANGTYRVTGDLAGWVIYALGRVDVTAKKWYTLTLIIKGRLSSGMLNGKTVWKNIPVSFPKNGWAAIGTHSFEFAQFDNFHVEATR.

The first 26 residues, Met-1–Ala-26, serve as a signal peptide directing secretion. Substrate-binding residues include Thr-93, Trp-135, and Asn-181. Glu-182 serves as the catalytic Proton donor/acceptor. Glu-258 serves as the catalytic Nucleophile. Residues Cys-271 and Cys-378 are joined by a disulfide bond. Asn-363 is a glycosylation site (N-linked (GlcNAc...) asparagine). Arg-380 contacts substrate. N-linked (GlcNAc...) asparagine glycans are attached at residues Asn-387, Asn-543, and Asn-586.

It belongs to the glycosyl hydrolase 59 family.

The protein resides in the lysosome. The catalysed reaction is a beta-D-galactosyl-(1&lt;-&gt;1')-N-acylsphing-4-enine + H2O = an N-acylsphing-4-enine + D-galactose. It catalyses the reaction beta-D-galactosyl-(1&lt;-&gt;1)-sphing-4-enine + H2O = sphing-4-enine + D-galactose. The enzyme catalyses a D-galactosylceramide + H2O = an N-acyl-sphingoid base + D-galactose. Hydrolyzes the galactose ester bonds of glycolipids such as galactosylceramide and galactosylsphingosine. Enzyme with very low activity responsible for the lysosomal catabolism of galactosylceramide, a major lipid in myelin, kidney and epithelial cells of small intestine and colon. In Canis lupus familiaris (Dog), this protein is Galactocerebrosidase.